The chain runs to 644 residues: Acetolactate synthase 1, chloroplastic (644 aa).

The N-terminal 43 residues, 1–43 (MATTAAAAAAALSAAATAKTGRKNHQRHHVLPARGRVGAAAVR), are a transit peptide targeting the chloroplast. Residues 47 to 67 (VSPVTPPSPAPPATPLRPWGP) form a disordered region. The span at 50 to 61 (VTPPSPAPPATP) shows a compositional bias: pro residues. Glutamate 118 serves as a coordination point for thiamine diphosphate. A disulfide bridge links cysteine 138 with cysteine 284. FAD is bound by residues arginine 220, 326–347 (HGTV…FGVR), and 369–388 (DIDP…ICAD). The segment at 461 to 541 (QHQMWAAQYY…VKVMVLNNQH (81 aa)) is thiamine pyrophosphate binding. Mg(2+) is bound by residues aspartate 512 and asparagine 539.

Belongs to the TPP enzyme family. The cofactor is Mg(2+). Thiamine diphosphate is required as a cofactor.

The protein resides in the plastid. Its subcellular location is the chloroplast. It carries out the reaction 2 pyruvate + H(+) = (2S)-2-acetolactate + CO2. It participates in amino-acid biosynthesis; L-isoleucine biosynthesis; L-isoleucine from 2-oxobutanoate: step 1/4. The protein operates within amino-acid biosynthesis; L-valine biosynthesis; L-valine from pyruvate: step 1/4. The chain is Acetolactate synthase 1, chloroplastic (ALS1) from Oryza sativa subsp. japonica (Rice).